A 150-amino-acid chain; its full sequence is Soluble pyridine nucleotide transhydrogenase (150 aa).

Belongs to the class-I pyridine nucleotide-disulfide oxidoreductase family. The cofactor is FAD.

The protein resides in the cytoplasm. The enzyme catalyses NAD(+) + NADPH = NADH + NADP(+). In terms of biological role, conversion of NADPH, generated by peripheral catabolic pathways, to NADH, which can enter the respiratory chain for energy generation. This is Soluble pyridine nucleotide transhydrogenase (sthA) from Pectobacterium carotovorum subsp. carotovorum (Erwinia carotovora subsp. carotovora).